The primary structure comprises 70 residues: Small ribosomal subunit protein bS21 (70 aa).

Residues 39–70 (EKPTTERKRKKAAAVSRTRKRLRSQMLPKKLY) are disordered. The span at 45-61 (RKRKKAAAVSRTRKRLR) shows a compositional bias: basic residues.

Belongs to the bacterial ribosomal protein bS21 family.

The protein is Small ribosomal subunit protein bS21 of Ralstonia nicotianae (strain ATCC BAA-1114 / GMI1000) (Ralstonia solanacearum).